A 243-amino-acid polypeptide reads, in one-letter code: Ras-related protein Rab-12 (243 aa).

The residue at position 1 (Met-1) is an N-acetylmethionine. The disordered stretch occupies residues Met-1 to Arg-36. A phosphoserine mark is found at Ser-15, Ser-20, and Ser-24. Gly-51, Val-52, Gly-53, Lys-54, Thr-55, Ser-72, and Thr-73 together coordinate GTP. A Mg(2+)-binding site is contributed by Thr-55. Short sequence motifs (switch) lie at residues Asp-64–Phe-78 and Asp-96–Ser-113. Mg(2+) is bound by residues Thr-73 and Asp-96. Gly-99 serves as a coordination point for GTP. Phosphoserine; by LRRK2 is present on Ser-105. GTP is bound by residues Asn-154, Lys-155, Asp-157, Ser-185, Ala-186, and Lys-187. S-geranylgeranyl cysteine attachment occurs at residues Cys-242 and Cys-243.

This sequence belongs to the small GTPase superfamily. Rab family. As to quaternary structure, interacts with RABIF and OPTN. Interacts with LRRK2; interaction facilitates phosphorylation of Ser-105. Interacts with GDI1, GDI2, CHM and CHML; these interactions are disrupted by phosphorylation on Ser-105. Interacts with RILPL1 and RILPL2; these interactions are dependent on phosphorylation of Ser-105. Mg(2+) is required as a cofactor. In terms of processing, phosphorylation of Ser-105 in the switch II region by LRRK2 prevents the association of RAB regulatory proteins, including CHM, CHML and RAB GDP dissociation inhibitors GDI1 and GDI2. Ubiquitously expressed.

It is found in the recycling endosome membrane. Its subcellular location is the lysosome membrane. The protein localises to the golgi apparatus membrane. It localises to the cytoplasmic vesicle. The protein resides in the autophagosome. The catalysed reaction is GTP + H2O = GDP + phosphate + H(+). Regulated by guanine nucleotide exchange factors (GEFs) including DENND3 which promote the exchange of bound GDP for free GTP. Regulated by GTPase activating proteins (GAPs) which increase the GTP hydrolysis activity. Inhibited by GDP dissociation inhibitors (GDIs). In terms of biological role, the small GTPases Rab are key regulators of intracellular membrane trafficking, from the formation of transport vesicles to their fusion with membranes. Rabs cycle between an inactive GDP-bound form and an active GTP-bound form that is able to recruit to membranes different set of downstream effectors directly responsible for vesicle formation, movement, tethering and fusion. RAB12 may play a role in protein transport from recycling endosomes to lysosomes regulating, for instance, the degradation of the transferrin receptor. Involved in autophagy. This Mus musculus (Mouse) protein is Ras-related protein Rab-12.